A 155-amino-acid polypeptide reads, in one-letter code: Small ribosomal subunit protein uS7 (155 aa).

It belongs to the universal ribosomal protein uS7 family. Part of the 30S ribosomal subunit. Contacts proteins S9 and S11.

Its function is as follows. One of the primary rRNA binding proteins, it binds directly to 16S rRNA where it nucleates assembly of the head domain of the 30S subunit. Is located at the subunit interface close to the decoding center, probably blocks exit of the E-site tRNA. The protein is Small ribosomal subunit protein uS7 of Thioalkalivibrio sulfidiphilus (strain HL-EbGR7).